Here is a 2598-residue protein sequence, read N- to C-terminus: Partially reducing polyketide synthase men1 (2598 aa).

A Ketosynthase family 3 (KS3) domain is found at 7-435 (SQSIAIVGLS…GSNAHAILDD (429 aa)). Active-site for beta-ketoacyl synthase activity residues include Cys-181, His-316, and His-358. Over residues 450-459 (GKSHHHHHQH) the composition is skewed to basic residues. Disordered stretches follow at residues 450–490 (GKSH…NGTT) and 537–557 (AEKQ…DPEK). The span at 474–490 (VNGTSEVNGTSGVNGTT) shows a compositional bias: low complexity. A Malonyl-CoA:ACP transacylase (MAT) domain is found at 611–915 (YVFTGQGAQW…RGPVTQILQS (305 aa)). Residues 1008–1151 (LGLIGAPMPN…GSVAVEFGAL (144 aa)) form an N-terminal hotdog fold region. The PKS/mFAS DH domain maps to 1008 to 1325 (LGLIGAPMPN…CVEMPSASGM (318 aa)). The segment at 1009 to 1323 (GLIGAPMPNF…LVCVEMPSAS (315 aa)) is dehydratase (DH) domain. Positions 1169–1325 (TISQEVDVFY…CVEMPSASGM (157 aa)) are C-terminal hotdog fold. Positions 1886 to 2197 (GMLNTLCFEI…ARSRQDKIVI (312 aa)) constitute an Enoyl reductase (ER) domain. The 178-residue stretch at 2222 to 2399 (TYLIAGGLGG…AATIDLGIVK (178 aa)) folds into the Ketoreductase (KR) domain. A Carrier domain is found at 2510 to 2587 (EAARLVSAAV…AFASDLAKKG (78 aa)). At Ser-2547 the chain carries O-(pantetheine 4'-phosphoryl)serine.

It depends on pantetheine 4'-phosphate as a cofactor.

The protein operates within secondary metabolite biosynthesis. In terms of biological role, partially reducing polyketide synthase; part of the gene cluster that mediates the biosynthesis of menisporopsin A, a bioactive macrocyclic polylactone. The biosynthesis of menisporopsin A is performed by a reducing (man1) and a non-reducing (men2) polyketide synthase that catalyze the formation of each menisporopsin A subunits, while the esterification and cyclolactonization activities are probably peformed by the unusual thioesterase domain of men2. First, a reduced diketide intermediate, 3-hydroxybutyryl-S-ACP is produced by men1 and transferred to men2; this is followed by a second reduced diketide which is further elongated using 3 units of malonyl-coA to form a reduced pentaketide. The cyclization of this intermediate by the PT domain forms the second subunit, 2,4-dihydroxy-6-(2-hydroxy-n-propyl)benzoyl-S-ACP. The TE domain of men2 then esterifies the secondary hydroxyl group on the side chain of the second subunit with the acyl-TE of the first subunit to form the first ester intermediate. This process occurs iteratively to form a linear tetraester intermediate. The final subunit is formed by a similar process, except that an extra malonyl-CoA is required in an additional elongation step to form a reduced hexaketide intermediate, and the carbonyl group next to the secondary hydroxyl group is reduced by a trans-acting ketoreductase. Again, the PT domain catalyzes cyclization to form the largest subunit, 2,4-dihydroxy-6-(2,4-dihydroxy-n-pentyl) benzoyl-S-ACP. Then the linear pentaester intermediate is formed. In this step, if the intermediate transfer rate is slow, intra- molecular cyclization involving the secondary hydroxyl group of the pentaester intermediate may occur to form menisporopsin B. Alternatively, transfer of the pentaester intermediate to the TE domain would allow cyclolactonization to be catalyzed by the TE to form menisporopsin A. The polypeptide is Partially reducing polyketide synthase men1 (Menisporopsis theobromae).